Consider the following 315-residue polypeptide: Glycine--tRNA ligase alpha subunit (315 aa).

This sequence belongs to the class-II aminoacyl-tRNA synthetase family. In terms of assembly, tetramer of two alpha and two beta subunits.

The protein resides in the cytoplasm. It carries out the reaction tRNA(Gly) + glycine + ATP = glycyl-tRNA(Gly) + AMP + diphosphate. The polypeptide is Glycine--tRNA ligase alpha subunit (Sorangium cellulosum (strain So ce56) (Polyangium cellulosum (strain So ce56))).